The sequence spans 425 residues: Probable sucrose-phosphatase 3a (425 aa).

Belongs to the sucrose phosphatase family. Homodimer. Requires Mg(2+) as cofactor.

The catalysed reaction is sucrose 6(F)-phosphate + H2O = sucrose + phosphate. It functions in the pathway glycan biosynthesis; sucrose biosynthesis; sucrose from D-fructose 6-phosphate and UDP-alpha-D-glucose: step 2/2. In terms of biological role, catalyzes the final step of sucrose synthesis. This is Probable sucrose-phosphatase 3a (SPP3A) from Arabidopsis thaliana (Mouse-ear cress).